The primary structure comprises 294 residues: Cytidine deaminase (294 aa).

CMP/dCMP-type deaminase domains lie at 48–168 (DEDA…FGPK) and 186–294 (LTGD…VLLA). A substrate-binding site is contributed by 89 to 91 (NME). Histidine 102 lines the Zn(2+) pocket. Catalysis depends on glutamate 104, which acts as the Proton donor. Cysteine 129 and cysteine 132 together coordinate Zn(2+).

It belongs to the cytidine and deoxycytidylate deaminase family. As to quaternary structure, homodimer. It depends on Zn(2+) as a cofactor.

It catalyses the reaction cytidine + H2O + H(+) = uridine + NH4(+). It carries out the reaction 2'-deoxycytidine + H2O + H(+) = 2'-deoxyuridine + NH4(+). Functionally, this enzyme scavenges exogenous and endogenous cytidine and 2'-deoxycytidine for UMP synthesis. The protein is Cytidine deaminase of Escherichia coli (strain ATCC 8739 / DSM 1576 / NBRC 3972 / NCIMB 8545 / WDCM 00012 / Crooks).